We begin with the raw amino-acid sequence, 490 residues long: Bifunctional pantoate ligase/cytidylate kinase (490 aa).

1 to 8 (MGGLHQGH) contributes to the ATP binding site. Residues 1-253 (MGGLHQGHAR…CGETRLIDHV (253 aa)) form a pantoate--beta-alanine ligase region. The active-site Proton donor is the His-8. A (R)-pantoate-binding site is contributed by Gln-35. Residue Gln-35 coordinates beta-alanine. Residue 124–127 (GEKD) coordinates ATP. A (R)-pantoate-binding site is contributed by Gln-130. Residues Val-153 and 161–164 (ASSR) contribute to the ATP site. The tract at residues 254 to 490 (FIMTRSPIVA…AKEIWPTPQG (237 aa)) is cytidylate kinase.

The protein in the N-terminal section; belongs to the pantothenate synthetase family. In the C-terminal section; belongs to the cytidylate kinase family. Type 1 subfamily.

It localises to the cytoplasm. It catalyses the reaction (R)-pantoate + beta-alanine + ATP = (R)-pantothenate + AMP + diphosphate + H(+). The catalysed reaction is CMP + ATP = CDP + ADP. The enzyme catalyses dCMP + ATP = dCDP + ADP. Its pathway is cofactor biosynthesis; (R)-pantothenate biosynthesis; (R)-pantothenate from (R)-pantoate and beta-alanine: step 1/1. Catalyzes the condensation of pantoate with beta-alanine in an ATP-dependent reaction via a pantoyl-adenylate intermediate. Its function is as follows. Catalyzes the transfer of a phosphate group from ATP to either CMP or dCMP to form CDP or dCDP and ADP, respectively. The polypeptide is Bifunctional pantoate ligase/cytidylate kinase (Synechococcus sp. (strain WH7803)).